Reading from the N-terminus, the 178-residue chain is Large ribosomal subunit protein uL6 (178 aa).

This sequence belongs to the universal ribosomal protein uL6 family. As to quaternary structure, part of the 50S ribosomal subunit.

Its function is as follows. This protein binds to the 23S rRNA, and is important in its secondary structure. It is located near the subunit interface in the base of the L7/L12 stalk, and near the tRNA binding site of the peptidyltransferase center. In Micrococcus luteus (Micrococcus lysodeikticus), this protein is Large ribosomal subunit protein uL6.